The following is a 404-amino-acid chain: Probable protein phosphatase 2C 30 (404 aa).

The segment covering 42 to 52 has biased composition (basic and acidic residues); sequence AERGAEEETSG. Positions 42 to 72 are disordered; the sequence is AERGAEEETSGKRRRLDGGGGEASTDEEDRE. The region spanning 77-399 is the PPM-type phosphatase domain; the sequence is RYGFTSVCGR…DNVSVVVVNL (323 aa). Residues D111, G112, and D298 each coordinate Mn(2+). A disordered region spans residues 321-369; it reads GRRERNRSSPTSNLSPRQSSSSGDEAPNDGAPSAAAGSESDEESAAEED. Residues 330–343 show a composition bias toward polar residues; the sequence is PTSNLSPRQSSSSG. D390 lines the Mn(2+) pocket.

The protein belongs to the PP2C family. In terms of assembly, interacts with PYL5 and SAPK2. Binding to PYL5 is dependent on the presence of abscisic acid (ABA). Interacts with PYL3, PYL5 and PYL9. Binding to PYL5 and PYL9 is dependent on the presence of ABA. It depends on Mg(2+) as a cofactor. Mn(2+) serves as cofactor.

Its subcellular location is the nucleus. It carries out the reaction O-phospho-L-seryl-[protein] + H2O = L-seryl-[protein] + phosphate. The enzyme catalyses O-phospho-L-threonyl-[protein] + H2O = L-threonyl-[protein] + phosphate. Together with ABI5, PYL5 and SAPK2, is part of an abscisic acid (ABA) signaling unit that modulates seed germination and early seedling growth. The polypeptide is Probable protein phosphatase 2C 30 (Oryza sativa subsp. japonica (Rice)).